Here is a 262-residue protein sequence, read N- to C-terminus: Transcription factor Spi-B (262 aa).

The tract at residues 1 to 31 (MLALEAAQLDGPHFSCLYPDGVFYDLDSCKH) is TAD1 (Acidic). Residues 41-61 (PDSLWDWTVAPPVPATPYEAF) form a TAD2 region. Residues 140–163 (ALEVSDSESDEALVAGPEGKGSEA) are disordered. The ETS DNA-binding region spans 169–252 (LRLYQFLLGL…VKRKLTYQFD (84 aa)).

It belongs to the ETS family. In terms of assembly, can form homotypic interactions. Interacts with IRF4/Pip. Interacts with JUN. Interacts with TBP. May also interact with CREBBP and EP300. Interacts with NONO/p54(nrb). In terms of tissue distribution, expressed in plasmacytoid dendritic cells (pDCs) and B-cells, not expressed in T-cells or granulocytes. May also be enriched in stem cell populations of the liver.

It localises to the nucleus. It is found in the cytoplasm. In terms of biological role, sequence specific transcriptional activator which binds to the PU-box, a purine-rich DNA sequence (5'-GAGGAA-3') that can act as a lymphoid-specific enhancer. Promotes development of plasmacytoid dendritic cells (pDCs), also known as type 2 DC precursors (pre-DC2) or natural interferon (IFN)-producing cells. These cells have the capacity to produce large amounts of interferon and block viral replication. May be required for B-cell receptor (BCR) signaling, which is necessary for normal B-cell development and antigenic stimulation. This is Transcription factor Spi-B (SPIB) from Homo sapiens (Human).